The following is a 172-amino-acid chain: Biogenesis of lysosome-related organelles complex 1 subunit 6 (172 aa).

The span at 1-10 shows a compositional bias: pro residues; sequence MSVPEPPPPD. Disordered stretches follow at residues 1-37 and 141-172; these read MSVP…PDEG and QKRQ…AKRT. Residues 63-167 adopt a coiled-coil conformation; sequence DLQRSKRALQ…FEREKQLTAK (105 aa). Over residues 143 to 164 the composition is skewed to basic and acidic residues; that stretch reads RQREELEREQQREKEFEREKQL.

This sequence belongs to the BLOC1S6 family. In terms of assembly, octamer composed of one copy each BLOC1S1, BLOC1S2, BLOC1S3, BLOC1S4, BLOC1S5, BLOC1S6, DTNBP1/BLOC1S7 and SNAPIN/BLOC1S8. Interacts with SNAP47. Homodimer. Component of the biogenesis of lysosome-related organelles complex 1 (BLOC-1) composed of BLOC1S1, BLOC1S2, BLOC1S3, BLOC1S4, BLOC1S5, BLOC1S6, DTNBP1/BLOC1S7 and SNAPIN/BLOC1S8. Interacts with BLOC1S4, BLOC1S5, DTNBP1/BLOC1S7, F-actin, SNAP25 isoform 1 and STX12. In terms of processing, phosphorylated. In terms of tissue distribution, expressed in liver, kidney and spleen (at protein level). Ubiquitously expressed, with the highest expression levels observed in brain, heart, liver and kidney.

The protein resides in the cytoplasm. The protein localises to the membrane. Component of the BLOC-1 complex, a complex that is required for normal biogenesis of lysosome-related organelles (LRO), such as platelet dense granules and melanosomes. In concert with the AP-3 complex, the BLOC-1 complex is required to target membrane protein cargos into vesicles assembled at cell bodies for delivery into neurites and nerve terminals. The BLOC-1 complex, in association with SNARE proteins, is also proposed to be involved in neurite extension. May play a role in intracellular vesicle trafficking, particularly in the vesicle-docking and fusion process. This is Biogenesis of lysosome-related organelles complex 1 subunit 6 (Bloc1s6) from Mus musculus (Mouse).